Consider the following 40-residue polypeptide: Photosystem II reaction center protein Y (40 aa).

The chain crosses the membrane as a helical span at residues 5–23 (LVLVASPILLAVGWAGFNI).

It belongs to the PsbY family. As to quaternary structure, PSII is composed of 1 copy each of membrane proteins PsbA, PsbB, PsbC, PsbD, PsbE, PsbF, PsbH, PsbI, PsbJ, PsbK, PsbL, PsbM, PsbT, PsbX, PsbY, PsbZ, Psb30/Ycf12, peripheral proteins PsbO, CyanoQ (PsbQ), PsbU, PsbV and a large number of cofactors. It forms dimeric complexes.

Its subcellular location is the cellular thylakoid membrane. Loosely associated component of the core of photosystem II (PSII), it is not always seen in crystals. PSII is a light-driven water plastoquinone oxidoreductase, using light energy to abstract electrons from H(2)O, generating a proton gradient subsequently used for ATP formation. This Synechococcus sp. (strain RCC307) protein is Photosystem II reaction center protein Y.